The chain runs to 408 residues: LL-diaminopimelate aminotransferase (408 aa).

Residues Tyr15 and Gly42 each coordinate substrate. Pyridoxal 5'-phosphate is bound by residues Tyr72, 108-109 (SK), Tyr132, Asn187, Tyr218, and 246-248 (SFS). The substrate site is built by Lys109, Tyr132, and Asn187. At Lys249 the chain carries N6-(pyridoxal phosphate)lysine. Residues Arg257 and Asn292 each coordinate pyridoxal 5'-phosphate. Substrate contacts are provided by Asn292 and Arg388.

This sequence belongs to the class-I pyridoxal-phosphate-dependent aminotransferase family. LL-diaminopimelate aminotransferase subfamily. As to quaternary structure, homodimer. Pyridoxal 5'-phosphate is required as a cofactor.

The enzyme catalyses (2S,6S)-2,6-diaminopimelate + 2-oxoglutarate = (S)-2,3,4,5-tetrahydrodipicolinate + L-glutamate + H2O + H(+). The protein operates within amino-acid biosynthesis; L-lysine biosynthesis via DAP pathway; LL-2,6-diaminopimelate from (S)-tetrahydrodipicolinate (aminotransferase route): step 1/1. Its function is as follows. Involved in the synthesis of meso-diaminopimelate (m-DAP or DL-DAP), required for both lysine and peptidoglycan biosynthesis. Catalyzes the direct conversion of tetrahydrodipicolinate to LL-diaminopimelate. The sequence is that of LL-diaminopimelate aminotransferase from Prochlorococcus marinus (strain MIT 9303).